The primary structure comprises 723 residues: CSC1-like protein ERD4 (723 aa).

At 1-5 the chain is on the cytoplasmic side; the sequence is MEFAS. A helical membrane pass occupies residues 6–26; the sequence is FLVSLGTSAIIFVVLMFLFTW. Topologically, residues 27–90 are extracellular; sequence LSRRPGNVPV…TAVYFVFQST (64 aa). The helical transmembrane segment at 91 to 111 threads the bilayer; the sequence is VLGIFALSALLLLPTLLPIAA. Residues 112–148 lie on the Cytoplasmic side of the membrane; the sequence is TDNNLETSRSATDTTSNGTFSQLDNLSMANITKSSSR. The helical transmembrane segment at 149–169 threads the bilayer; that stretch reads LWAFLGAVYWVSVVTYFMLWK. Residues 170–364 lie on the Extracellular side of the membrane; it reads AYKHVAALRA…IKFFSRIVRQ (195 aa). Residues 365 to 385 traverse the membrane as a helical segment; that stretch reads YVIYFLVAITILFYMIPIAFV. At 386-416 the chain is on the cytoplasmic side; that stretch reads SAITTLANLQKALPFLKPIVDIAFIRTILES. The chain crosses the membrane as a helical span at residues 417–437; sequence YLPQIALIVFLAMLPKFLMFL. The Extracellular segment spans residues 438 to 456; sequence SKSEGIPSQSHAIRATSGK. The chain crosses the membrane as a helical span at residues 457–477; that stretch reads YFYFSVLNVFIGVTLAGSLFE. Residues 478–508 lie on the Cytoplasmic side of the membrane; it reads NLKALEEKPNSFITLLATSLPKSATFFLTYV. The helical transmembrane segment at 509–529 threads the bilayer; it reads ALKFFVGYGLELSRIIPLIIF. Residues 530–572 lie on the Extracellular side of the membrane; sequence HLKKKYLCKTEAEVKEAWYPGDLSYATRVPSDMLILTITFCYS. The helical transmembrane segment at 573–593 threads the bilayer; the sequence is VIAPLILVFGVIYFGLGWLIL. Residues 594 to 614 lie on the Cytoplasmic side of the membrane; the sequence is RNQALKVYVPSYESYGRMWPH. A helical membrane pass occupies residues 615–635; it reads IHTRILAALFLFQLVMFGYLG. At 636-637 the chain is on the extracellular side; the sequence is VK. Residues 638–658 traverse the membrane as a helical segment; sequence IFVWAILLVPLIFISLIFGYV. Residues 659–723 are Cytoplasmic-facing; sequence CRQKFYGGFE…YQDYAAISAA (65 aa).

It belongs to the CSC1 (TC 1.A.17) family.

It is found in the plastid. It localises to the chloroplast membrane. Functionally, acts as an osmosensitive calcium-permeable cation channel. The sequence is that of CSC1-like protein ERD4 (ERD4) from Brassica juncea (Indian mustard).